The chain runs to 1021 residues: Chondroitin sulfate ABC endolyase (1021 aa).

A signal peptide spans 1 to 24; the sequence is MPIFRFTALAMTLGLLSAPYNAMA. Na(+)-binding residues include H43, M70, Q73, and D211. The active-site Proton acceptor is the H501. Y508 functions as the Proton donor in the catalytic mechanism.

The protein belongs to the polysaccharide lyase 8 family. As to quaternary structure, monomer.

Its subcellular location is the periplasm. It catalyses the reaction Endolytic cleavage of (1-&gt;4)-beta-galactosaminic bonds between N-acetylgalactosamine and either D-glucuronic acid or L-iduronic acid to produce a mixture of Delta(4)-unsaturated oligosaccharides of different sizes that are ultimately degraded to Delta(4)-unsaturated tetra- and disaccharides.. Is inhibited by Zn(2+), Ni(2+), Fe(2+) and Cu(2+). Functionally, endolytic, broad-specificity glycosaminoglycan lyase, which degrades the polysaccharides chondroitin, chondroitin-4-sulfate, chondroitin-6-sulfate, dermatan sulfate and to a lesser extent hyaluronan, by beta-elimination of 1,4-hexosaminidic bond to unsaturated tetrasaccharides and disaccharides. Is not active against keratan sulfate, heparan sulfate, and heparin. Is able to promote functional recovery in the injured central nervous system (CNS), via its role in the disruption of the normal organization of the extracellular matrix (ECM). The sequence is that of Chondroitin sulfate ABC endolyase from Proteus vulgaris.